A 467-amino-acid polypeptide reads, in one-letter code: Cell division protein FtsP (467 aa).

Residues 1–28 (MRSLTRRDFLKSGILASSLSCIPQSVMA) constitute a signal peptide (tat-type signal).

The protein belongs to the FtsP family. In terms of processing, predicted to be exported by the Tat system. The position of the signal peptide cleavage has not been experimentally proven.

It is found in the periplasm. In terms of biological role, cell division protein that is required for growth during stress conditions. May be involved in protecting or stabilizing the divisomal assembly under conditions of stress. This is Cell division protein FtsP from Histophilus somni (strain 2336) (Haemophilus somnus).